We begin with the raw amino-acid sequence, 518 residues long: Chromosomal replication initiator protein DnaA (518 aa).

A domain I, interacts with DnaA modulators region spans residues 1–72 (MNEFWQHCSA…DLARDFWHSP (72 aa)). The domain II stretch occupies residues 72–181 (PVDVQFVLDP…GESDSTYERS (110 aa)). The interval 155 to 178 (AAARRTWRPGAAAQAAGGESDSTY) is disordered. The tract at residues 182–398 (KLNPVLTFDN…GALRKILAYS (217 aa)) is domain III, AAA+ region. ATP is bound by residues Gly226, Gly228, Lys229, and Thr230. The tract at residues 399–518 (KFHGREITIE…LHVLEQTLKG (120 aa)) is domain IV, binds dsDNA.

Belongs to the DnaA family. As to quaternary structure, oligomerizes as a right-handed, spiral filament on DNA at oriC.

The protein resides in the cytoplasm. In terms of biological role, plays an essential role in the initiation and regulation of chromosomal replication. ATP-DnaA binds to the origin of replication (oriC) to initiate formation of the DNA replication initiation complex once per cell cycle. Binds the DnaA box (a 9 base pair repeat at the origin) and separates the double-stranded (ds)DNA. Forms a right-handed helical filament on oriC DNA; dsDNA binds to the exterior of the filament while single-stranded (ss)DNA is stabiized in the filament's interior. The ATP-DnaA-oriC complex binds and stabilizes one strand of the AT-rich DNA unwinding element (DUE), permitting loading of DNA polymerase. After initiation quickly degrades to an ADP-DnaA complex that is not apt for DNA replication. Binds acidic phospholipids. The protein is Chromosomal replication initiator protein DnaA of Paraburkholderia phymatum (strain DSM 17167 / CIP 108236 / LMG 21445 / STM815) (Burkholderia phymatum).